A 348-amino-acid polypeptide reads, in one-letter code: Fructose-1,6-bisphosphatase class 1 (348 aa).

4 residues coordinate Mg(2+): Glu-107, Asp-129, Ile-131, and Asp-132. Substrate is bound by residues 132-135 (DGSS), Asn-224, Tyr-252, and Lys-282. Position 288 (Glu-288) interacts with Mg(2+).

This sequence belongs to the FBPase class 1 family. In terms of assembly, homotetramer. The cofactor is Mg(2+).

It is found in the cytoplasm. It carries out the reaction beta-D-fructose 1,6-bisphosphate + H2O = beta-D-fructose 6-phosphate + phosphate. It participates in carbohydrate biosynthesis; Calvin cycle. The sequence is that of Fructose-1,6-bisphosphatase class 1 from Microcystis aeruginosa (strain NIES-843 / IAM M-2473).